Here is a 453-residue protein sequence, read N- to C-terminus: TATA box-binding protein-associated factor RNA polymerase I subunit A (453 aa).

As to quaternary structure, component of the transcription factor SL1/TIF-IB complex, composed of TBP and at least TAF1A, TAF1B, TAF1C and TAF1D. In the complex interacts directly with TBP, TAF1A and TAF1B. Interaction of the SL1/TIF-IB subunits with TBP excludes interaction of TBP with the transcription factor IID (TFIID) subunits. Interacts with UBFT. Interacts with CEBPA (isoform 1 and isoform 4). Part of Pol I pre-initiation complex (PIC), in which Pol I core assembles with RRN3 and promoter-bound UTBF and SL1/TIF-IB complex.

It localises to the nucleus. The protein localises to the nucleolus. Component of the transcription factor SL1/TIF-IB complex, which is involved in the assembly of the PIC (pre-initiation complex) during RNA polymerase I-dependent transcription. The rate of PIC formation probably is primarily dependent on the rate of association of SL1/TIF-IB with the rDNA promoter. SL1/TIF-IB is involved in stabilization of nucleolar transcription factor 1/UBTF on rDNA. Formation of SL1/TIF-IB excludes the association of TBP with TFIID subunits. This chain is TATA box-binding protein-associated factor RNA polymerase I subunit A (Taf1a), found in Mus musculus (Mouse).